An 813-amino-acid chain; its full sequence is Probable E3 ubiquitin-protein ligase hulA (813 aa).

In terms of domain architecture, C2 spans 1–109; sequence MGSNLPAQPN…QMGGDEMLTR (109 aa). 2 disordered regions span residues 131-235 and 251-351; these read NLST…GWER and RTTT…YFVD. Positions 148-167 are enriched in polar residues; that stretch reads VQSSTSSGLVPQVAPSSSHP. Positions 188-215 are enriched in low complexity; that stretch reads RVPSTTRPSSTAAPASAAGAAVSNSHGS. The 34-residue stretch at 227–260 folds into the WW 1 domain; it reads GRLPAGWERREDNLGRTYYVDHNTRTTTWTRPSS. The segment covering 251-264 has biased composition (polar residues); it reads RTTTWTRPSSNYNE. The span at 265 to 292 shows a compositional bias: basic and acidic residues; sequence HAQRSQREANMQLERRAHQSRMLPEDRT. A compositionally biased stretch (polar residues) spans 293 to 307; that stretch reads GANSPNLPESSQQAH. Residues 322-331 show a composition bias toward low complexity; that stretch reads ATGATTAGTG. 2 WW domains span residues 331 to 364 and 391 to 424; these read GELP…DPRR and GPLP…DPRL. One can recognise an HECT domain in the interval 480–813; the sequence is SASDLKKRLM…VEETLGFGQE (334 aa). Cys-781 (glycyl thioester intermediate) is an active-site residue.

It belongs to the RSP5/NEDD4 family. In terms of assembly, interacts with creD.

It localises to the cytoplasm. It catalyses the reaction S-ubiquitinyl-[E2 ubiquitin-conjugating enzyme]-L-cysteine + [acceptor protein]-L-lysine = [E2 ubiquitin-conjugating enzyme]-L-cysteine + N(6)-ubiquitinyl-[acceptor protein]-L-lysine.. It participates in protein modification; protein ubiquitination. E3 ubiquitin-protein ligase which accepts ubiquitin from an E2 ubiquitin-conjugating enzyme in the form of a thioester and then directly transfers the ubiquitin to targeted substrates. Probably involved in the regulatory network controlling carbon source utilization. The chain is Probable E3 ubiquitin-protein ligase hulA (hulA) from Aspergillus fumigatus (strain CBS 144.89 / FGSC A1163 / CEA10) (Neosartorya fumigata).